The following is a 126-amino-acid chain: Holo-[acyl-carrier-protein] synthase (126 aa).

2 residues coordinate Mg(2+): Asp9 and Glu58.

Belongs to the P-Pant transferase superfamily. AcpS family. The cofactor is Mg(2+).

The protein resides in the cytoplasm. The enzyme catalyses apo-[ACP] + CoA = holo-[ACP] + adenosine 3',5'-bisphosphate + H(+). Its function is as follows. Transfers the 4'-phosphopantetheine moiety from coenzyme A to a Ser of acyl-carrier-protein. The polypeptide is Holo-[acyl-carrier-protein] synthase (Escherichia coli O17:K52:H18 (strain UMN026 / ExPEC)).